The chain runs to 108 residues: Tetrahydromethanopterin S-methyltransferase subunit B (108 aa).

Residues 79–99 (GMFFGFWVTMAILVLVTILAV) traverse the membrane as a helical segment.

This sequence belongs to the MtrB family. As to quaternary structure, the complex is composed of 8 subunits; MtrA, MtrB, MtrC, MtrD, MtrE, MtrF, MtrG and MtrH.

Its subcellular location is the cell membrane. It catalyses the reaction 5-methyl-5,6,7,8-tetrahydromethanopterin + coenzyme M + 2 Na(+)(in) = 5,6,7,8-tetrahydromethanopterin + methyl-coenzyme M + 2 Na(+)(out). Its pathway is one-carbon metabolism; methanogenesis from CO(2); methyl-coenzyme M from 5,10-methylene-5,6,7,8-tetrahydromethanopterin: step 2/2. Its function is as follows. Part of a complex that catalyzes the formation of methyl-coenzyme M and tetrahydromethanopterin from coenzyme M and methyl-tetrahydromethanopterin. This is an energy-conserving, sodium-ion translocating step. In Methanococcus maripaludis (strain C7 / ATCC BAA-1331), this protein is Tetrahydromethanopterin S-methyltransferase subunit B.